A 638-amino-acid chain; its full sequence is SUMO-activating enzyme subunit 2 (638 aa).

ATP contacts are provided by residues 24 to 29, D48, 56 to 59, K72, 95 to 96, and 117 to 122; these read GAGGIG, NLNR, SI, and DNRAAR. C158 and C161 together coordinate Zn(2+). K164 participates in a covalent cross-link: Glycyl lysine isopeptide (Lys-Gly) (interchain with G-Cter in SUMO1). Residue C173 is the Glycyl thioester intermediate of the active site. Residue K190 forms a Glycyl lysine isopeptide (Lys-Gly) (interchain with G-Cter in SUMO) linkage. Residues 202-233 are disordered; the sequence is ADQEVSPDRADPEAAWEPTEAEARARASNEDG. Residue S207 is modified to Phosphoserine. A compositionally biased stretch (basic and acidic residues) spans 222–233; it reads AEARARASNEDG. A Glycyl lysine isopeptide (Lys-Gly) (interchain with G-Cter in SUMO1); alternate cross-link involves residue K236. Glycyl lysine isopeptide (Lys-Gly) (interchain with G-Cter in SUMO2); alternate cross-links involve residues K236 and K257. Residues K257 and K271 each participate in a glycyl lysine isopeptide (Lys-Gly) (interchain with G-Cter in SUMO); alternate cross-link. K271 carries the post-translational modification N6-acetyllysine; alternate. K275 is covalently cross-linked (Glycyl lysine isopeptide (Lys-Gly) (interchain with G-Cter in SUMO)). A Glycyl lysine isopeptide (Lys-Gly) (interchain with G-Cter in SUMO2) cross-link involves residue K369. K418 is covalently cross-linked (Glycyl lysine isopeptide (Lys-Gly) (interchain with G-Cter in SUMO1); alternate). K418 participates in a covalent cross-link: Glycyl lysine isopeptide (Lys-Gly) (interchain with G-Cter in SUMO2); alternate. C439 and C442 together coordinate Zn(2+). Residue S505 is modified to Phosphoserine. K538 is covalently cross-linked (Glycyl lysine isopeptide (Lys-Gly) (interchain with G-Cter in SUMO2)). S548 and S590 each carry phosphoserine. Residues 548–561 show a composition bias toward basic and acidic residues; the sequence is SPEKVGPKQAEDAA. Residues 548–638 are disordered; that stretch reads SPEKVGPKQA…EDPDDVIALD (91 aa). A compositionally biased stretch (acidic residues) spans 581 to 594; that stretch reads EQDDVLIVDSDEEG. The segment covering 603–614 has biased composition (basic and acidic residues); it reads GDDKARKRKLEE. Residue K609 forms a Glycyl lysine isopeptide (Lys-Gly) (interchain with G-Cter in SUMO) linkage. K611 is covalently cross-linked (Glycyl lysine isopeptide (Lys-Gly) (interchain with G-Cter in SUMO); alternate). An N6-acetyllysine; alternate modification is found at K611. K621 participates in a covalent cross-link: Glycyl lysine isopeptide (Lys-Gly) (interchain with G-Cter in SUMO). Residues 628–638 are compositionally biased toward acidic residues; sequence MEDPDDVIALD.

It belongs to the ubiquitin-activating E1 family. As to quaternary structure, heterodimer of SAE1 and UBA2/SAE2. The heterodimer corresponds to the two domains that are encoded on a single polypeptide chain in ubiquitin-activating enzyme E1. Interacts with UBE2I. Sumoylated with SUMO1 and SUMO2/3 and by UBC9. Sumoylation at Lys-236 inhibits enzymatic activity. Sumoylation at the C-terminal lysine cluster plays an essential role in nuclear trafficking. As to expression, broadly expressed, with highest levels in testis.

The protein resides in the cytoplasm. Its subcellular location is the nucleus. It functions in the pathway protein modification; protein sumoylation. Its function is as follows. The heterodimer acts as an E1 ligase for SUMO1, SUMO2, SUMO3, and probably SUMO4. It mediates ATP-dependent activation of SUMO proteins followed by formation of a thioester bond between a SUMO protein and a conserved active site cysteine residue on UBA2/SAE2. The protein is SUMO-activating enzyme subunit 2 (Uba2) of Mus musculus (Mouse).